The following is a 55-amino-acid chain: Large ribosomal subunit protein bL33 (55 aa).

Residues 1–11 show a composition bias toward basic and acidic residues; sequence MAKGGREKIKL. The segment at 1-29 is disordered; sequence MAKGGREKIKLESSAGTGHFYTTSKNKRT. The span at 14–24 shows a compositional bias: polar residues; the sequence is SAGTGHFYTTS.

This sequence belongs to the bacterial ribosomal protein bL33 family.

The polypeptide is Large ribosomal subunit protein bL33 (Polynucleobacter asymbioticus (strain DSM 18221 / CIP 109841 / QLW-P1DMWA-1) (Polynucleobacter necessarius subsp. asymbioticus)).